A 578-amino-acid polypeptide reads, in one-letter code: Thiol:disulfide interchange protein DsbD (578 aa).

An N-terminal signal peptide occupies residues 1 to 24 (MAQRFITLILLLCSILLAPHSAQA). 2 disulfides stabilise this stretch: C134–C140 and C195–C317. 9 helical membrane passes run 183 to 203 (ALLIGIGIAFTPCVLPMYPLI), 219 to 239 (ILLLAIVYVQGMALTYTLLGL), 256 to 276 (YVLIGLSALFVLLALSMFGLY), 297 to 317 (GGSLAGVFAMGALAGLICSPC), 318 to 338 (TTAPLSAILLYIAQSGNMLAG), 339 to 359 (GGTLYLYALGMGIPLVIVTLF), 370 to 390 (WMQYVKEAFGFVILALPVFLL), 397 to 417 (VWGLRLWSLLAIAFFGWAFIL), and 421 to 441 (AHSGWARAFQLLLLAALLIAA). The Thioredoxin domain maps to 438-578 (LIAARPLQDW…FLQHLQNLPR (141 aa)). A disulfide bridge links C493 with C496.

The protein belongs to the thioredoxin family. DsbD subfamily.

It is found in the cell inner membrane. The enzyme catalyses [protein]-dithiol + NAD(+) = [protein]-disulfide + NADH + H(+). It catalyses the reaction [protein]-dithiol + NADP(+) = [protein]-disulfide + NADPH + H(+). Required to facilitate the formation of correct disulfide bonds in some periplasmic proteins and for the assembly of the periplasmic c-type cytochromes. Acts by transferring electrons from cytoplasmic thioredoxin to the periplasm. This transfer involves a cascade of disulfide bond formation and reduction steps. This Yersinia enterocolitica serotype O:8 / biotype 1B (strain NCTC 13174 / 8081) protein is Thiol:disulfide interchange protein DsbD.